The following is a 160-amino-acid chain: uncharacterized protein (160 aa).

The N-terminal stretch at 1 to 18 is a signal peptide; the sequence is MELLSLAILSSFFAVANQ.

This is an uncharacterized protein from Caenorhabditis elegans.